Reading from the N-terminus, the 45-residue chain is Major cold shock protein (45 aa).

A CSD domain is found at 1–45 (EKGFGFISTENGQDVFAHFSAIQTNGFKTLEEGQKVEFDVEEGQR).

In terms of assembly, homodimer.

It localises to the cytoplasm. The sequence is that of Major cold shock protein (cspA) from Streptococcus dysgalactiae.